Here is a 126-residue protein sequence, read N- to C-terminus: Aspartate 1-decarboxylase 2 (126 aa).

Ser-25 (schiff-base intermediate with substrate; via pyruvic acid) is an active-site residue. Position 25 is a pyruvic acid (Ser) (Ser-25). Residue Thr-57 participates in substrate binding. Residue Tyr-58 is the Proton donor of the active site. Residue 73–75 (GSA) participates in substrate binding.

It belongs to the PanD family. As to quaternary structure, heterooctamer of four alpha and four beta subunits. Pyruvate is required as a cofactor. Is synthesized initially as an inactive proenzyme, which is activated by self-cleavage at a specific serine bond to produce a beta-subunit with a hydroxyl group at its C-terminus and an alpha-subunit with a pyruvoyl group at its N-terminus.

The protein localises to the cytoplasm. The enzyme catalyses L-aspartate + H(+) = beta-alanine + CO2. It functions in the pathway cofactor biosynthesis; (R)-pantothenate biosynthesis; beta-alanine from L-aspartate: step 1/1. Its function is as follows. Catalyzes the pyruvoyl-dependent decarboxylation of aspartate to produce beta-alanine. This Polaromonas sp. (strain JS666 / ATCC BAA-500) protein is Aspartate 1-decarboxylase 2.